We begin with the raw amino-acid sequence, 121 residues long: Two-component response regulator ORR12 (121 aa).

One can recognise a Response regulatory domain in the interval H5 to I121. D55 is modified (4-aspartylphosphate).

It belongs to the ARR family. Type-A subfamily. Post-translationally, two-component system major event consists of a His-to-Asp phosphorelay between a sensor histidine kinase (HK) and a response regulator (RR). In plants, the His-to-Asp phosphorelay involves an additional intermediate named Histidine-containing phosphotransfer protein (HPt). This multistep phosphorelay consists of a His-Asp-His-Asp sequential transfer of a phosphate group between first a His and an Asp of the HK protein, followed by the transfer to a conserved His of the HPt protein and finally the transfer to an Asp in the receiver domain of the RR protein. In terms of tissue distribution, expressed in flowers and panicles.

In terms of biological role, functions as a response regulator involved in His-to-Asp phosphorelay signal transduction system. Phosphorylation of the Asp residue in the receiver domain activates the ability of the protein to promote the transcription of target genes. Type-A response regulators seem to act as negative regulators of the cytokinin signaling. In Oryza sativa subsp. japonica (Rice), this protein is Two-component response regulator ORR12.